The following is a 517-amino-acid chain: Type II methyltransferase M.CeqI (517 aa).

Disordered regions lie at residues methionine 1–arginine 21 and glycine 33–serine 62. Over residues arginine 51–serine 62 the composition is skewed to basic residues. TPR repeat units follow at residues alanine 283–asparagine 316, alanine 361–serine 394, and serine 476–methionine 509.

It catalyses the reaction a 2'-deoxyadenosine in DNA + S-adenosyl-L-methionine = an N(6)-methyl-2'-deoxyadenosine in DNA + S-adenosyl-L-homocysteine + H(+). In terms of biological role, a methylase, recognizes the double-stranded sequence 5'-GATATC-3', methylates A-? on both strands, and protects the DNA from cleavage by the CeqI endonuclease. The protein is Type II methyltransferase M.CeqI (ceqIM) of Rhodococcus hoagii (Corynebacterium equii).